Reading from the N-terminus, the 366-residue chain is MPGKELPDRCMNCHEAEPAFLLRERHVCQECYIRFLNFKPFRRMERYRLRRNMPQTGPCKLLLPLSYGVSSTVLLHMLHRQLEALRSKKHGPAGFEILVLVVEPSTISPVPPHEEGFALAQQTFPLCSFTRLPFHSIFELDPDVHQIMSQYAGEHFTDDTSLSDEERLNRFRRSITTATSKSDVDQILLNKLVVAFAKKMECRGIVWGDSDSKLAAKTLANVAKGRGSAVTWQVCDGMSPFGLEFNFPLRDVFTAEIRTYATLFPELAGIIVHDEPPSENTLTKNLSIDELMIRYVSTQGEKYPGVMLNVTRTASKLQSSGTSIGGLQCNFCGAFMTTNENITGEQGNEQLQFCYACARSQPELSC.

The protein belongs to the CTU2/NCS2 family.

It localises to the cytoplasm. It participates in tRNA modification; 5-methoxycarbonylmethyl-2-thiouridine-tRNA biosynthesis. Functionally, plays a central role in 2-thiolation of mcm(5)S(2)U at tRNA wobble positions of tRNA(Lys), tRNA(Glu) and tRNA(Gln). May act by forming a heterodimer with ncs6 that ligates sulfur from thiocarboxylated urm1 onto the uridine of tRNAs at wobble position. Prior mcm(5) tRNA modification by the elongator complex is required for 2-thiolation. May also be involved in protein urmylation. This Aspergillus niger (strain ATCC MYA-4892 / CBS 513.88 / FGSC A1513) protein is Cytoplasmic tRNA 2-thiolation protein 2 (ncs2).